The chain runs to 98 residues: Biogenesis of lysosome-related organelles complex 1 subunit SNN1 (98 aa).

The stretch at 55–98 (MDEQELLQEEGSLKEELARVNQLKKRLDKLTELYAELARKCGAL) forms a coiled coil.

The protein belongs to the SNAPIN family. In terms of assembly, component of the biogenesis of lysosome-related organelles complex-1 (BLOC-1).

It localises to the endosome. Functionally, component of the biogenesis of lysosome-related organelles complex-1 (BLOC-1), a complex involved in endosomal cargo sorting. This chain is Biogenesis of lysosome-related organelles complex 1 subunit SNN1 (SNN1), found in Eremothecium gossypii (strain ATCC 10895 / CBS 109.51 / FGSC 9923 / NRRL Y-1056) (Yeast).